Reading from the N-terminus, the 189-residue chain is uncharacterized protein (189 aa).

A Macro domain is found at 1 to 174 (MKCWTLGDRV…GMEKGVREAL (174 aa)).

This is an uncharacterized protein from Aeropyrum pernix (strain ATCC 700893 / DSM 11879 / JCM 9820 / NBRC 100138 / K1).